A 425-amino-acid polypeptide reads, in one-letter code: MPYVDRQNRICGFLDIEEHENSGKFLRRYFILDTQANCLLWYMDNPQNLAMGAGAVGALQLTYISKVSIATPKQKPKTPFCFVINALSQRYFLQANDQKDMKDWVEALNQASKITVPKGGGLPMTTEVLKSLAAPPALEKKPQVAYKTEIIGGVVVHTPISQNGGDGQEGSEPGSHTILRRSQSYIPTSGCRASTGPPLIKSGYCVKQGNVRKSWKRRFFALDDFTICYFKCEQDREPLRTIFLKDVLKTHECLVKSGDLLMRDNLFEIITSSRTFYVQADSPEDMHSWIKEIGAAVQALKCHPRETSFSRSISLTRPGSSSLSSGPNSILCRGRPPLEEKKALCKAPSVASSWQPWTPVPQAGEKLLPPGDTSEDSLFTPRPGEGSAPGVLPSSRIRHRSEPQHPKEKPFMFNLDDENIRTSDV.

A PH 1 domain is found at 7–113 (QNRICGFLDI…WVEALNQASK (107 aa)). Lys141 is covalently cross-linked (Glycyl lysine isopeptide (Lys-Gly) (interchain with G-Cter in SUMO2)). The residue at position 184 (Ser184) is a Phosphoserine. A PH 2 domain is found at 198 to 298 (PLIKSGYCVK…WIKEIGAAVQ (101 aa)). The span at 312–330 (SISLTRPGSSSLSSGPNSI) shows a compositional bias: low complexity. The segment at 312–332 (SISLTRPGSSSLSSGPNSILC) is disordered. Phosphoserine is present on residues Ser314 and Ser349. The interval 352 to 425 (SSWQPWTPVP…DDENIRTSDV (74 aa)) is disordered. Positions 400–410 (RSEPQHPKEKP) are enriched in basic and acidic residues.

Binds MPDZ and PTPN13. Highly expressed in heart, kidney, spleen and peripheral blood leukocytes. Detected at lower levels in brain, skeletal muscle, colon, thymus, liver, small intestine, placenta and lung.

It is found in the cytoplasm. The protein localises to the cell membrane. It localises to the nucleus. Functionally, binds specifically to phosphatidylinositol 3,4-diphosphate (PtdIns3,4P2), but not to other phosphoinositides. May recruit other proteins to the plasma membrane. The protein is Pleckstrin homology domain-containing family A member 2 (PLEKHA2) of Homo sapiens (Human).